Reading from the N-terminus, the 449-residue chain is Putative recombination initiation defects 3 (449 aa).

Residues 21-56 (LRRSAEPQASQQLRSQQSQQSFSQGPSSSQRGCGGF) form a disordered region. Positions 28–50 (QASQQLRSQQSQQSFSQGPSSSQ) are enriched in low complexity. The short motif at 437–441 (RTKRK) is the Nuclear localization signal element.

In terms of assembly, interacts with PRD1; this interaction facilitates a binding to DFO.

It localises to the nucleus. Involved in DNA cleavage that forms the double-strand breaks (DSB) that initiate meiotic recombination. The chain is Putative recombination initiation defects 3 from Arabidopsis thaliana (Mouse-ear cress).